A 359-amino-acid chain; its full sequence is UDP-3-O-acylglucosamine N-acyltransferase (359 aa).

Residue His256 is the Proton acceptor of the active site.

Belongs to the transferase hexapeptide repeat family. LpxD subfamily. As to quaternary structure, homotrimer.

It catalyses the reaction a UDP-3-O-[(3R)-3-hydroxyacyl]-alpha-D-glucosamine + a (3R)-hydroxyacyl-[ACP] = a UDP-2-N,3-O-bis[(3R)-3-hydroxyacyl]-alpha-D-glucosamine + holo-[ACP] + H(+). The protein operates within bacterial outer membrane biogenesis; LPS lipid A biosynthesis. Functionally, catalyzes the N-acylation of UDP-3-O-acylglucosamine using 3-hydroxyacyl-ACP as the acyl donor. Is involved in the biosynthesis of lipid A, a phosphorylated glycolipid that anchors the lipopolysaccharide to the outer membrane of the cell. The protein is UDP-3-O-acylglucosamine N-acyltransferase of Rhodopseudomonas palustris (strain HaA2).